The sequence spans 202 residues: MKNRLLILSLLVSVPAFAWQPQTGDIIFQISRSSQSKAIQLATHTDYSHTGMLVIRNKKPYVFEAVGPVKYTPLKQWIAHGEKGKYVVRRVEGGLSVEQQQKLAQTAKRYLGKPYDFSFSWSDDRQYCSEVVWKVYQNALGMRVGEQQKLKEFDLSSPQVQAKLKERYGKNIPLEETVVSPQAVFDAPQLTTVAKEWPLFSW.

Residues 1 to 18 (MKNRLLILSLLVSVPAFA) form the signal peptide.

This sequence to E.coli YebB.

This is an uncharacterized protein from Escherichia coli (strain K12).